Here is a 272-residue protein sequence, read N- to C-terminus: uncharacterized protein (272 aa).

Positions Ala-193–Leu-250 are disordered. Low complexity predominate over residues Asp-215–Asp-233. A compositionally biased stretch (polar residues) spans Asn-235–Asn-248.

It belongs to the pal1 family.

It localises to the cytoplasm. The protein localises to the nucleus. This is an uncharacterized protein from Schizosaccharomyces pombe (strain 972 / ATCC 24843) (Fission yeast).